The chain runs to 574 residues: MLRASASGAKCAVKLIVPLHRGFIVRSDIIPLRLRDSEYVESAVSFAEPLQTYSGKKVAISSRSDLTTYFAAAAAGLILRQGSTHASDAGSQALFQMVESDLANRLSFPWIQPGTPRRRTLALVDANSSHPQDGLGFYRAARELGINVVVLENAGHWLEDPAQAHWREAFIPTRLTNPPEEDVGDHILASLRAYGKPVDGIVTFADSFWYYIARIAHEIGVETAPPDSMRIATNKFLTSKYVGHDAYLASNVDEALRIAKEVALPYPLIVKPCDGWSSEGVSRVESPDAFPAAVKSIDTSRHGTEFVMEPYCDGPEVDVNLVLLDGEVLFAEICDDLPKSADVNGLTVGSLTNFHELYSVYPSALPSKELELLIHSFVDTLLRLGIRNGVMHLEGRVQNSSMEYREQNRMMHLQPRAPQATRPEPSAWLIEINPRPLGMTGSHIIESTYGIDYWGLAAVLGVGDKDRARALSQPYRDGPQYTCVMVFIPADFPPSSQGIFDTDDICADLLARRPDLAQHISRCATLVRRGQKVAHPTTGRHTFLAYFNVFSRAGREEALDLARQVREEVRYSFL.

Residues 234 to 462 (NKFLTSKYVG…YWGLAAVLGV (229 aa)) form the ATP-grasp domain. Position 263–318 (263–318 (ALPYPLIVKPCDGWSSEGVSRVESPDAFPAAVKSIDTSRHGTEFVMEPYCDGPEVD)) interacts with ATP. Mg(2+)-binding residues include glutamate 394, glutamate 431, and asparagine 433. 3 residues coordinate Mn(2+): glutamate 394, glutamate 431, and asparagine 433.

It depends on Mg(2+) as a cofactor. Mn(2+) serves as cofactor.

It participates in secondary metabolite biosynthesis. In terms of biological role, ATP-grasp enzyme; part of the gene cluster that mediates the biosynthesis of the isoquinoline alkaloids fumisoquin A, fumisoquin B and fumisoquin C; as well as small amounts of fumipyrrole as a shunt metabolite. The products of the cluster lead to a brown coloration and are important for growth and conidiation. The nonribosomal peptide synthetase-like protein fsqF, which lacks a canonical condensation domain, is required for addition of a serine-derived dehydroalanine moiety to activated tyrosine but is not essential for the subsequent steps leading to isoquinoline formation. A different enzyme, most likely the ATP-grasp enzyme fsqD, is responsible for activation of tyrosine. Three additional enzymes encoded by the fsq cluster, the N-methyltransferase fsqC, the phenol 2-monooxygenase fsqG and the FAD-dependent oxidase fsqB, catalyze the formation of the isoquinoline ring system in the fumisoquins. FsqB converts the fspF thiolation domain-bound (2S,4S,5S)-2-amino-6-(3,4-dihydroxyphenyl)-4-hydroxy-5-(methylamino)hexanoyl into isoquinoline. The cyclization most likely proceeds via a two-step mechanism, beginning with FAD-dependent oxidation of the methyl group to an iminium species followed by electrophilic attack on the deprotonated phenol. In Aspergillus fumigatus (strain ATCC MYA-4609 / CBS 101355 / FGSC A1100 / Af293) (Neosartorya fumigata), this protein is ATP-grasp enzyme fsqD.